We begin with the raw amino-acid sequence, 177 residues long: Large ribosomal subunit protein uL6 (177 aa).

Positions 154–171 (PEPYKGKGVRYADEQVRR) are enriched in basic and acidic residues. The interval 154 to 177 (PEPYKGKGVRYADEQVRRKEAKKK) is disordered.

Belongs to the universal ribosomal protein uL6 family. In terms of assembly, part of the 50S ribosomal subunit.

This protein binds to the 23S rRNA, and is important in its secondary structure. It is located near the subunit interface in the base of the L7/L12 stalk, and near the tRNA binding site of the peptidyltransferase center. The chain is Large ribosomal subunit protein uL6 from Marinobacter nauticus (strain ATCC 700491 / DSM 11845 / VT8) (Marinobacter aquaeolei).